The primary structure comprises 535 residues: Probable histone-arginine methyltransferase 1.3 (535 aa).

Met1 carries the post-translational modification N-acetylmethionine. Positions 141–456 (EASSAKMYFH…QSYTIDLTLS (316 aa)) constitute an SAM-dependent MTase PRMT-type domain. S-adenosyl-L-methionine-binding residues include Gln158, Arg167, Gly191, Glu213, and Glu243. Active-site residues include Glu257 and Glu266. Position 271 (Ser271) interacts with S-adenosyl-L-methionine. Residues 494 to 517 (VAQEPPLQPQPELSTQQDIQTPND) form a disordered region. Residues 507–516 (STQQDIQTPN) are compositionally biased toward polar residues.

Belongs to the class I-like SAM-binding methyltransferase superfamily. Protein arginine N-methyltransferase family. Interacts with PQT3 in the nucleus. Post-translationally, ubiquitinated by PQT3.

The protein resides in the nucleus. Its subcellular location is the cytoplasm. It carries out the reaction L-arginyl-[protein] + 2 S-adenosyl-L-methionine = N(omega),N(omega)-dimethyl-L-arginyl-[protein] + 2 S-adenosyl-L-homocysteine + 2 H(+). Functionally, methylates (mono- and asymmetric dimethylation) the guanidino nitrogens of arginyl residues in several proteins involved in DNA packaging, transcription regulation, and mRNA stability. Recruited to promoters upon gene activation, methylates histone H3 and activates transcription via chromatin remodeling. Positive regulator in the oxidative stress tolerance that promotes the expression of enzymes preventing oxidative stress such as APX1 and GPX1 by histone methylation (H3R17me2a). Confers tolerance to cadmium CdCl(2) and salt NaCl stresses. The chain is Probable histone-arginine methyltransferase 1.3 (PRMT13) from Arabidopsis thaliana (Mouse-ear cress).